The primary structure comprises 258 residues: MMNPLIIKLGGVLLDNEEALERLFTALVNYRESHQRPLVIVHGGGCVVDELMKGLNLPVKKKNGLRVTPADQIGIIAGALAGTANKTLLAWAKKHHIASVGLFLGDGDSVKVIQLDEALGHVGLAQPGSPKLINTLLENDFLPVVSSIGVTEDGQLMNVNADQAATALAATLGADLILLSDVSGILDGKGQRIAEMTAAKAEQLIDQGIITDGMIVKVNAALDAARALGRPVDIASWRHADQLPALFNGTPIGTRILA.

Substrate is bound by residues 44 to 45, R66, and N158; that span reads GG. Residues 181-186 and 209-211 each bind ATP; these read DVSGIL and IIT.

Belongs to the acetylglutamate kinase family. ArgB subfamily. Homodimer.

It is found in the cytoplasm. It catalyses the reaction N-acetyl-L-glutamate + ATP = N-acetyl-L-glutamyl 5-phosphate + ADP. It functions in the pathway amino-acid biosynthesis; L-arginine biosynthesis; N(2)-acetyl-L-ornithine from L-glutamate: step 2/4. In terms of biological role, catalyzes the ATP-dependent phosphorylation of N-acetyl-L-glutamate. This Salmonella arizonae (strain ATCC BAA-731 / CDC346-86 / RSK2980) protein is Acetylglutamate kinase.